Here is a 201-residue protein sequence, read N- to C-terminus: ATP-dependent Clp protease proteolytic subunit (201 aa).

The active-site Nucleophile is the S103. H128 is an active-site residue.

This sequence belongs to the peptidase S14 family. Fourteen ClpP subunits assemble into 2 heptameric rings which stack back to back to give a disk-like structure with a central cavity, resembling the structure of eukaryotic proteasomes.

The protein resides in the cytoplasm. The catalysed reaction is Hydrolysis of proteins to small peptides in the presence of ATP and magnesium. alpha-casein is the usual test substrate. In the absence of ATP, only oligopeptides shorter than five residues are hydrolyzed (such as succinyl-Leu-Tyr-|-NHMec, and Leu-Tyr-Leu-|-Tyr-Trp, in which cleavage of the -Tyr-|-Leu- and -Tyr-|-Trp bonds also occurs).. Its function is as follows. Cleaves peptides in various proteins in a process that requires ATP hydrolysis. Has a chymotrypsin-like activity. Plays a major role in the degradation of misfolded proteins. This is ATP-dependent Clp protease proteolytic subunit from Bordetella avium (strain 197N).